The primary structure comprises 290 residues: 33 kDa chaperonin (290 aa).

Cystine bridges form between Cys235–Cys237 and Cys268–Cys271.

This sequence belongs to the HSP33 family. Post-translationally, under oxidizing conditions two disulfide bonds are formed involving the reactive cysteines. Under reducing conditions zinc is bound to the reactive cysteines and the protein is inactive.

Its subcellular location is the cytoplasm. Functionally, redox regulated molecular chaperone. Protects both thermally unfolding and oxidatively damaged proteins from irreversible aggregation. Plays an important role in the bacterial defense system toward oxidative stress. The sequence is that of 33 kDa chaperonin from Streptococcus sanguinis (strain SK36).